The chain runs to 101 residues: Acylphosphatase (101 aa).

Positions arginine 12–arginine 98 constitute an Acylphosphatase-like domain. Active-site residues include arginine 27 and asparagine 45.

The protein belongs to the acylphosphatase family.

It carries out the reaction an acyl phosphate + H2O = a carboxylate + phosphate + H(+). This chain is Acylphosphatase (acyP), found in Trichormus variabilis (strain ATCC 29413 / PCC 7937) (Anabaena variabilis).